Here is a 77-residue protein sequence, read N- to C-terminus: Large ribosomal subunit protein bL28 (77 aa).

Residues 1-25 form a disordered region; the sequence is MARVCQVTGKAPMSGNNVSHANNKT.

Belongs to the bacterial ribosomal protein bL28 family.

The chain is Large ribosomal subunit protein bL28 from Paraburkholderia xenovorans (strain LB400).